Reading from the N-terminus, the 141-residue chain is Nucleoside diphosphate kinase (141 aa).

Positions 9, 57, 85, 91, 102, and 112 each coordinate ATP. Histidine 115 (pros-phosphohistidine intermediate) is an active-site residue.

This sequence belongs to the NDK family. Homotetramer. Mg(2+) serves as cofactor.

It is found in the cytoplasm. The enzyme catalyses a 2'-deoxyribonucleoside 5'-diphosphate + ATP = a 2'-deoxyribonucleoside 5'-triphosphate + ADP. It catalyses the reaction a ribonucleoside 5'-diphosphate + ATP = a ribonucleoside 5'-triphosphate + ADP. Functionally, major role in the synthesis of nucleoside triphosphates other than ATP. The ATP gamma phosphate is transferred to the NDP beta phosphate via a ping-pong mechanism, using a phosphorylated active-site intermediate. The sequence is that of Nucleoside diphosphate kinase from Chlamydia trachomatis serovar D (strain ATCC VR-885 / DSM 19411 / UW-3/Cx).